We begin with the raw amino-acid sequence, 147 residues long: uncharacterized protein (147 aa).

This is an uncharacterized protein from Mycobacterium tuberculosis (strain CDC 1551 / Oshkosh).